We begin with the raw amino-acid sequence, 313 residues long: Protein-methionine-sulfoxide reductase catalytic subunit MsrP (313 aa).

A signal peptide (tat-type signal) is located at residues 1–46 (MPSYRAPKIAAAEITPERFFLDRRTFIAAAAGSLALSVPKPSRAAA). Residues asparagine 70, 73–74 (YE), cysteine 127, threonine 162, asparagine 212, arginine 217, and 228–230 (GIK) contribute to the Mo-molybdopterin site.

Belongs to the MsrP family. Heterodimer of a catalytic subunit (MsrP) and a heme-binding subunit (MsrQ). Requires Mo-molybdopterin as cofactor. Post-translationally, predicted to be exported by the Tat system. The position of the signal peptide cleavage has not been experimentally proven.

It is found in the periplasm. The catalysed reaction is L-methionyl-[protein] + a quinone + H2O = L-methionyl-(S)-S-oxide-[protein] + a quinol. It carries out the reaction L-methionyl-[protein] + a quinone + H2O = L-methionyl-(R)-S-oxide-[protein] + a quinol. In terms of biological role, part of the MsrPQ system that repairs oxidized periplasmic proteins containing methionine sulfoxide residues (Met-O), using respiratory chain electrons. Thus protects these proteins from oxidative-stress damage caused by reactive species of oxygen and chlorine generated by the host defense mechanisms. MsrPQ is essential for the maintenance of envelope integrity under bleach stress, rescuing a wide series of structurally unrelated periplasmic proteins from methionine oxidation. The catalytic subunit MsrP is non-stereospecific, being able to reduce both (R-) and (S-) diastereoisomers of methionine sulfoxide. This chain is Protein-methionine-sulfoxide reductase catalytic subunit MsrP, found in Rhizobium meliloti (strain 1021) (Ensifer meliloti).